A 224-amino-acid polypeptide reads, in one-letter code: Probable septum site-determining protein MinC (224 aa).

It belongs to the MinC family. Interacts with MinD and FtsZ.

Functionally, cell division inhibitor that blocks the formation of polar Z ring septums. Rapidly oscillates between the poles of the cell to destabilize FtsZ filaments that have formed before they mature into polar Z rings. Prevents FtsZ polymerization. The polypeptide is Probable septum site-determining protein MinC (Shewanella amazonensis (strain ATCC BAA-1098 / SB2B)).